The primary structure comprises 271 residues: Orotidine 5'-phosphate decarboxylase (271 aa).

Residue Lys-95 is the Proton donor of the active site.

This sequence belongs to the OMP decarboxylase family. Type 2 subfamily.

The enzyme catalyses orotidine 5'-phosphate + H(+) = UMP + CO2. Its pathway is pyrimidine metabolism; UMP biosynthesis via de novo pathway; UMP from orotate: step 2/2. This chain is Orotidine 5'-phosphate decarboxylase, found in Ralstonia pickettii (strain 12J).